Consider the following 319-residue polypeptide: Insulin gene enhancer protein ISL-2 (319 aa).

LIM zinc-binding domains follow at residues 1–43 (FLLR…CKRD) and 52–106 (CAQC…RADH). Disordered regions lie at residues 106–151 (HGPP…EKTT), 218–237 (QQHS…LVAG), and 286–319 (ESGS…PAET). The homeobox DNA-binding region spans 150–209 (TTRVRTVLNEKQLHTLRTCYAANPRPDALMKEQLVEMTGLSPRVIRVWFQNKRCKDKKKS). Positions 218–230 (QQHSDKTSLQGLT) are enriched in polar residues. The segment covering 286 to 303 (ESGSLGTSSGSDVTSLSS) has biased composition (low complexity). Residues 304-319 (QLPDTPNSMVPSPAET) are compositionally biased toward polar residues.

Its subcellular location is the nucleus. Its function is as follows. Transcriptional factor that defines subclasses of motoneurons that segregate into columns in the spinal cord and select distinct axon pathways. Acts in conjunction with LIM-1, LIM-3 and ISL-1. The chain is Insulin gene enhancer protein ISL-2 (ISL2) from Gallus gallus (Chicken).